A 330-amino-acid chain; its full sequence is tRNA (cytosine(38)-C(5))-methyltransferase (330 aa).

An SAM-dependent MTase C5-type domain is found at 7-330 (LRVLELYSGI…ISLLLEPLNF (324 aa)). The active site involves C81.

This sequence belongs to the class I-like SAM-binding methyltransferase superfamily. C5-methyltransferase family.

The protein resides in the cytoplasm. It localises to the nucleus. It carries out the reaction cytidine(38) in tRNA + S-adenosyl-L-methionine = 5-methylcytidine(38) in tRNA + S-adenosyl-L-homocysteine + H(+). Specifically methylates cytosine 38 in the anticodon loop of tRNA(Asp). Can also methylate cytosine 38 in tRNA(Glu), albeit to a lower level, but not tRNA(Lys). Pmt1-dependent tRNA methylation is induced by nitrogen limitation and depends on the nutrient-sensing protein kinase sck2. Does not have DNA-methylation activity. The sequence is that of tRNA (cytosine(38)-C(5))-methyltransferase (pmt1) from Schizosaccharomyces pombe (strain 972 / ATCC 24843) (Fission yeast).